A 496-amino-acid polypeptide reads, in one-letter code: UDP-glycosyltransferase 84A2 (496 aa).

Histidine 23 acts as the Proton acceptor in catalysis. Histidine 23 is a binding site for an anthocyanidin. Residues glutamine 352, histidine 367, tryptophan 370, asparagine 371, serine 372, and glutamate 375 each coordinate UDP-alpha-D-glucose. Glycine 390 provides a ligand contact to an anthocyanidin. Residues aspartate 391 and glutamine 392 each coordinate UDP-alpha-D-glucose.

This sequence belongs to the UDP-glycosyltransferase family. Expressed in roots, cotyledons, leaf veins and trichomes.

The catalysed reaction is (E)-sinapate + UDP-alpha-D-glucose = 1-O-(trans-sinapoyl)-beta-D-glucose + UDP. In terms of biological role, sinapate glucosyltransferase (SGT) required for the biosynthesis of the glucose ester sinapoylglucose and subsequently sinapoylmalate and sinapoylcholine. Is the major SGT activity in plant. Plays an important role in sinapoylation of anthocyanins. Sinapoylglucose produced by UGT84A2 is a significant source of sinapoyl moieties for anthocyanins. Indole-3-butyric acid (IBA)-specific glucosyltransferase that catalyzes the glucosylation of the auxin IBA, but not indole-3-acetic acid (IAA). May be involved in flowering regulation through IBA-mediated transcriptional repression of the auxin-response factors ARF6 and ARF8 and downstream flowering pathway genes. Can glucosylate the phytotoxic xenobiotic compound 2,4,5-trichlorophenol (TCP). The sequence is that of UDP-glycosyltransferase 84A2 from Arabidopsis thaliana (Mouse-ear cress).